Consider the following 239-residue polypeptide: Probable transcriptional regulatory protein BT9727_0453 (239 aa).

Belongs to the TACO1 family. YeeN subfamily.

It is found in the cytoplasm. The chain is Probable transcriptional regulatory protein BT9727_0453 from Bacillus thuringiensis subsp. konkukian (strain 97-27).